The chain runs to 307 residues: Acetaldehyde dehydrogenase (307 aa).

12–15 (SGNI) lines the NAD(+) pocket. The active-site Acyl-thioester intermediate is Cys127. Residues 158 to 166 (SAGPGTRQN) and Asn278 each bind NAD(+).

The protein belongs to the acetaldehyde dehydrogenase family. Monomer. Can also form a heterotetramer composed of two aldolase (TTHB246) and two dehydrogenase (TTHB247) subunits. Upon complex formation, the aldolase shows a 5-fold increase in substrate affinity, while the dehydrogenase shows a 3-fold decrease; the kcat values of each enzyme are reduced by 2-fold when they are in a complex.

It catalyses the reaction acetaldehyde + NAD(+) + CoA = acetyl-CoA + NADH + H(+). It carries out the reaction propanal + NAD(+) + CoA = propanoyl-CoA + NADH + H(+). In terms of biological role, catalyzes the conversion of acetaldehyde or propanal to acetyl-CoA or propanoyl-CoA, respectively, using NAD(+) and coenzyme A. The aldehyde substrates can be directly channeled from the aldolase TTHB246 to the dehydrogenase TTHB247. Is the final enzyme in the meta-cleavage pathway for the degradation of aromatic compounds. The chain is Acetaldehyde dehydrogenase from Thermus thermophilus (strain ATCC 27634 / DSM 579 / HB8).